Here is a 178-residue protein sequence, read N- to C-terminus: uncharacterized protein (178 aa).

The interval 152–178 is disordered; that stretch reads KKLKGAEPKEHQAPNFEPPTEIFPESN.

It belongs to the EUO family.

This is an uncharacterized protein from Chlamydia pneumoniae (Chlamydophila pneumoniae).